The following is a 1551-amino-acid chain: Envelopment polyprotein (1551 aa).

The N-terminal stretch at 1 to 17 is a signal peptide; sequence MSKRVLIIAVVVYLVFT. The Lumenal segment spans residues 18 to 546; it reads TQNQITGNHT…CRMSSRPTVA (529 aa). The interval 24 to 66 is disordered; the sequence is GNHTTINSSSPSTTEASSTPTVSRTPQTTTTSTAVSTTITATT. 2 N-linked (GlcNAc...) asparagine; by host glycosylation sites follow: asparagine 25 and asparagine 30. The span at 31-66 shows a compositional bias: low complexity; it reads SSSPSTTEASSTPTVSRTPQTTTTSTAVSTTITATT. Residues asparagine 80, asparagine 142, and asparagine 413 are each glycosylated (N-linked (GlcNAc...) asparagine; by host). A helical membrane pass occupies residues 547 to 567; that stretch reads LLLGIWIGCGYILTCIFSFLL. Residues 568–675 lie on the Cytoplasmic side of the membrane; it reads YHLILFFANC…ISVGIFLKRT (108 aa). A helical transmembrane segment spans residues 676 to 696; the sequence is TWLVVLLVLLGLAISPVQGAP. Residues 697–704 lie on the Lumenal side of the membrane; sequence TEVSNVKQ. The chain crosses the membrane as a helical span at residues 705–725; the sequence is DGDYSICYFIFGCLVTAALLL. Over 726–823 the chain is Cytoplasmic; the sequence is KVKRTNSNGI…REKLFTTGLQ (98 aa). A helical transmembrane segment spans residues 824–844; it reads LFINKTNVVVFALIMCFLLLL. Over 845–1451 the chain is Lumenal; sequence TGHNASAFDS…GDFFKHYIGS (607 aa). Residues asparagine 848, asparagine 1201, asparagine 1258, and asparagine 1420 are each glycosylated (N-linked (GlcNAc...) asparagine; by host). The cysteines at positions 1023 and 1216 are disulfide-linked. Residues 1452–1472 traverse the membrane as a helical segment; the sequence is IAVGVLGTVLPFALLILFFIY. Residues 1473–1551 lie on the Cytoplasmic side of the membrane; it reads GDKMLWPFKV…KKEKKLSEIA (79 aa).

The protein belongs to the nairovirus envelope glycoprotein family. As to quaternary structure, heterodimer with glycoprotein C; in prefusion state. In terms of assembly, heterodimer with glycoprotein N; in prefusion state. Homotrimeric; in postfusion state. In terms of processing, specific enzymatic cleavage by host MBTPS1/S1P/SKI-1 endopeptidase yield glycoprotein N. Specific enzymatic cleavages by host furin-like protease and MBTPS1/S1P endopeptidase yield GP38. Post-translationally, glycosylated.

Its subcellular location is the host endoplasmic reticulum membrane. It localises to the virion membrane. It is found in the host Golgi apparatus membrane. Glycoprotein N and glycoprotein C interact with each other and are present at the surface of the virion. Glycoprotein N probably locks the Gn-Gc complex in a prefusion state. Glycoprotein N and glycoprotein C are able to attach the virion to host cell receptors. This attachment induces virion internalization predominantly through clathrin-dependent endocytosis. In terms of biological role, glycoprotein C and glycoprotein N interact with each other and are present at the surface of the virion. The spikes at the surface of the virion are formed by an N-terminal extension of glycoprotein C. Glycoprotein N and glycoprotein C are able to attach the virion to host cell receptors. This attachment induces virion internalization predominantly through clathrin-dependent endocytosis. Class II fusion protein that promotes fusion of viral membrane with host endosomal membrane after endocytosis of the virion. Exposure to potassium is necessary for the conformational change leading to fusion. This chain is Envelopment polyprotein (GP), found in Amblyomma variegatum (Tropical bont tick).